The sequence spans 100 residues: Cell division protein FtsB (100 aa).

Topologically, residues 1–3 (MKW) are cytoplasmic. Residues 4–21 (LAIILVVALLALQYRLWM) form a helical membrane-spanning segment. Over 22–100 (GEGSIASVVS…TDKDTKKNKK (79 aa)) the chain is Periplasmic. Residues 26-73 (IASVVSLNREIAKQKEENARLRERNRLLAAEVDALKQGKDAIEERARN) are a coiled coil.

This sequence belongs to the FtsB family. Part of a complex composed of FtsB, FtsL and FtsQ.

The protein localises to the cell inner membrane. Essential cell division protein. May link together the upstream cell division proteins, which are predominantly cytoplasmic, with the downstream cell division proteins, which are predominantly periplasmic. The chain is Cell division protein FtsB from Saccharophagus degradans (strain 2-40 / ATCC 43961 / DSM 17024).